The primary structure comprises 78 residues: Major outer membrane lipoprotein Lpp (78 aa).

The N-terminal stretch at 1–20 (MNRTKLVLGAVILGSTLLAG) is a signal peptide. Cysteine 21 carries the N-palmitoyl cysteine lipid modification. Residue cysteine 21 is the site of S-diacylglycerol cysteine attachment. The stretch at 22–75 (SSNAKIDQLSTDVQTLNAKVDQLSNDVTAIRSDVQAAKDDAARANQRLDNQAHS) forms a coiled coil. 2 consecutive repeats follow at residues 24 to 34 (NAKIDQLSTDV) and 38 to 48 (NAKVDQLSNDV). N6-murein peptidoglycan lysine is present on lysine 78.

It belongs to the Lpp family. Homotrimer.

It localises to the cell outer membrane. The protein resides in the secreted. Its subcellular location is the cell wall. In terms of biological role, a highly abundant outer membrane lipoprotein that controls the distance between the inner and outer membranes. The only protein known to be covalently linked to the peptidoglycan network (PGN). Also non-covalently binds the PGN. The link between the cell outer membrane and PGN contributes to maintenance of the structural and functional integrity of the cell envelope, and maintains the correct distance between the PGN and the outer membrane. The sequence is that of Major outer membrane lipoprotein Lpp from Erwinia amylovora (Fire blight bacteria).